The following is a 287-amino-acid chain: Transcription initiation factor IIB 1 (287 aa).

The TFIIB-type zinc finger occupies 3-31 (HPHRCPECDGTIRETDTEHVCADCGLVVT). Residues C7, C10, C23, and C26 each contribute to the Zn(2+) site. Basic and acidic residues predominate over residues 40–53 (EWRTFSDDPDHAPE). Positions 40 to 63 (EWRTFSDDPDHAPERTGAPLTRSR) are disordered. A run of 2 repeats spans residues 111 to 194 (TEIR…NRDL) and 205 to 286 (EYLP…NLTD).

The protein belongs to the TFIIB family.

Stabilizes TBP binding to an archaeal box-A promoter. Also responsible for recruiting RNA polymerase II to the pre-initiation complex (DNA-TBP-TFIIB). The protein is Transcription initiation factor IIB 1 of Halobacterium salinarum (strain ATCC 700922 / JCM 11081 / NRC-1) (Halobacterium halobium).